A 148-amino-acid chain; its full sequence is Large ribosomal subunit protein bL9 (148 aa).

Belongs to the bacterial ribosomal protein bL9 family.

In terms of biological role, binds to the 23S rRNA. This is Large ribosomal subunit protein bL9 from Chloroflexus aurantiacus (strain ATCC 29366 / DSM 635 / J-10-fl).